Reading from the N-terminus, the 692-residue chain is Elongation factor G (692 aa).

In terms of domain architecture, tr-type G spans 8 to 282 (ENTRNIGIMA…AVIDYLPSPL (275 aa)). GTP contacts are provided by residues 17–24 (AHIDAGKT), 81–85 (DTPGH), and 135–138 (NKMD).

Belongs to the TRAFAC class translation factor GTPase superfamily. Classic translation factor GTPase family. EF-G/EF-2 subfamily.

It localises to the cytoplasm. Catalyzes the GTP-dependent ribosomal translocation step during translation elongation. During this step, the ribosome changes from the pre-translocational (PRE) to the post-translocational (POST) state as the newly formed A-site-bound peptidyl-tRNA and P-site-bound deacylated tRNA move to the P and E sites, respectively. Catalyzes the coordinated movement of the two tRNA molecules, the mRNA and conformational changes in the ribosome. The chain is Elongation factor G from Bacillus anthracis (strain CDC 684 / NRRL 3495).